Here is a 203-residue protein sequence, read N- to C-terminus: Glycerol-3-phosphate acyltransferase (203 aa).

The next 5 helical transmembrane spans lie at 13–33 (TLACLVFGYLLGSIPFGLILT), 66–86 (TLLLDALKGTAAAAIASLWGV), 88–108 (AGMAAGLAAFLGHLFPVWLSF), 118–138 (IGVLLGLVPVMVLLFAAAWLA), and 156–176 (IIPVALYATGNGKVALLFAVM).

The protein belongs to the PlsY family. In terms of assembly, probably interacts with PlsX.

The protein localises to the cell inner membrane. It carries out the reaction an acyl phosphate + sn-glycerol 3-phosphate = a 1-acyl-sn-glycero-3-phosphate + phosphate. It functions in the pathway lipid metabolism; phospholipid metabolism. In terms of biological role, catalyzes the transfer of an acyl group from acyl-phosphate (acyl-PO(4)) to glycerol-3-phosphate (G3P) to form lysophosphatidic acid (LPA). This enzyme utilizes acyl-phosphate as fatty acyl donor, but not acyl-CoA or acyl-ACP. The protein is Glycerol-3-phosphate acyltransferase of Sinorhizobium medicae (strain WSM419) (Ensifer medicae).